The sequence spans 66 residues: Large ribosomal subunit protein uL30 (66 aa).

This sequence belongs to the universal ribosomal protein uL30 family. Part of the 50S ribosomal subunit.

This Chelativorans sp. (strain BNC1) protein is Large ribosomal subunit protein uL30.